A 131-amino-acid chain; its full sequence is SPbeta prophage-derived uncharacterized protein YoqY (131 aa).

The protein is SPbeta prophage-derived uncharacterized protein YoqY (yoqY) of Bacillus subtilis (strain 168).